Consider the following 39-residue polypeptide: Photosystem II reaction center protein Psb30 (39 aa).

The helical transmembrane segment at 12–32 (IFQLTFVALIMLAGPFVIFLL) threads the bilayer.

The protein belongs to the Psb30/Ycf12 family. PSII is composed of 1 copy each of membrane proteins PsbA, PsbB, PsbC, PsbD, PsbE, PsbF, PsbH, PsbI, PsbJ, PsbK, PsbL, PsbM, PsbT, PsbX, PsbY, PsbZ, Psb30/Ycf12, peripheral proteins PsbO, CyanoQ (PsbQ), PsbU, PsbV and a large number of cofactors. It forms dimeric complexes.

The protein resides in the cellular thylakoid membrane. Its function is as follows. A core subunit of photosystem II (PSII), probably helps stabilize the reaction center. The chain is Photosystem II reaction center protein Psb30 from Microcystis aeruginosa (strain NIES-843 / IAM M-2473).